A 197-amino-acid polypeptide reads, in one-letter code: Chaperone protein dnaJ 20, chloroplastic (197 aa).

A chloroplast-targeting transit peptide spans 1–60 (MKCYKSSSILSTNHHPFFYKQQPISSLQPTSIPTTISYPTRTRFSSTRIQSRLTHDDPVK). In terms of domain architecture, J spans 66–133 (SFYDLLGVTE…RRRVLYDRDL (68 aa)). The segment at 169–197 (SGLRRRSNQKDNNTMSWAARMRRQQQESS) is disordered.

Belongs to the DnaJ family. C/III subfamily. As to expression, light-grown seedlings.

It is found in the plastid. The protein localises to the chloroplast. Its function is as follows. Plays a continuous role in plant development probably in the structural organization of compartments. This is Chaperone protein dnaJ 20, chloroplastic (ATJ20) from Arabidopsis thaliana (Mouse-ear cress).